The sequence spans 511 residues: MNQDRLRDVFDGAFSRIALARKIVTPRLMLKEIGVIKSIGTGIAKVSGLPGTCFEEVLKFPGGYGIAFNIEEEEIGVILLGDHSHLRAGDEVERRGHVMDVPVGDALIGRIVNPLGRALDGEAPVISSRRMPIERPAPQIMDRAPVTVPLQTGIKVIDALIPVGRGQRELILGDRQTGKSAIALDTILNQKDENVVCIYCAIGQQASSVAKVVAALQENDALSYTVVVVTEGNDPPGLIYVAPYAATAIGEYFMEQGRDVLIVYDDLSHHARAYRELSLLMRRPPGREAYPGDIFYIHSRLLERATHLRPELGGGSLTALPIVETEAEDIAAYIPTNLISITDGQIYLSPTLFQLGILPAIDVGKSVSRVGGKAQRPVYRAATGELRLDYSQFSELETFTRFGGRLDERTRTVIEHGRRIRACLQQPESSPVSVSEQIILLLALTAKLFDEVPLENMGEAERAVRAVVLNIPPELLARMEANESLNDADRHALLWHASTALDGLGSAHAKA.

Gly-173–Ser-180 contributes to the ATP binding site.

This sequence belongs to the ATPase alpha/beta chains family. F-type ATPases have 2 components, CF(1) - the catalytic core - and CF(0) - the membrane proton channel. CF(1) has five subunits: alpha(3), beta(3), gamma(1), delta(1), epsilon(1). CF(0) has three main subunits: a(1), b(2) and c(9-12). The alpha and beta chains form an alternating ring which encloses part of the gamma chain. CF(1) is attached to CF(0) by a central stalk formed by the gamma and epsilon chains, while a peripheral stalk is formed by the delta and b chains.

The protein resides in the cell inner membrane. It carries out the reaction ATP + H2O + 4 H(+)(in) = ADP + phosphate + 5 H(+)(out). Functionally, produces ATP from ADP in the presence of a proton gradient across the membrane. The alpha chain is a regulatory subunit. The protein is ATP synthase subunit alpha 2 of Nitrosospira multiformis (strain ATCC 25196 / NCIMB 11849 / C 71).